Here is a 228-residue protein sequence, read N- to C-terminus: Protein slowmo homolog (228 aa).

The PRELI/MSF1 domain occupies 1–172 (MPLFETIKHT…TIIKVQKEAE (172 aa)).

The protein belongs to the slowmo family.

The sequence is that of Protein slowmo homolog (slmo) from Dictyostelium discoideum (Social amoeba).